A 127-amino-acid polypeptide reads, in one-letter code: Small ribosomal subunit protein uS13 (127 aa).

The tract at residues 93-127 is disordered; that stretch reads RRSLPVRGQRTHTNARTRKGPRKGTVANKKKATAK.

Belongs to the universal ribosomal protein uS13 family. As to quaternary structure, part of the 30S ribosomal subunit. Forms a loose heterodimer with protein S19. Forms two bridges to the 50S subunit in the 70S ribosome.

In terms of biological role, located at the top of the head of the 30S subunit, it contacts several helices of the 16S rRNA. In the 70S ribosome it contacts the 23S rRNA (bridge B1a) and protein L5 of the 50S subunit (bridge B1b), connecting the 2 subunits; these bridges are implicated in subunit movement. Contacts the tRNAs in the A and P-sites. The polypeptide is Small ribosomal subunit protein uS13 (Koribacter versatilis (strain Ellin345)).